Here is a 141-residue protein sequence, read N- to C-terminus: MTQVLRAALTDQPIFLAEHEELVSHRSAGAIVGFVGMIRDRDGGRGVLRLEYSAHPSAAQVLADLVAEVAEESSGVRAVAASHRIGVLQVGEAALVAAVAADHRRAAFGTCAHLVETIKARLPVWKHQFFEDGTDEWVGSV.

Residues 37 to 39 (MIR), 103 to 104 (HR), K119, and 126 to 128 (KHQ) each bind substrate.

It belongs to the MoaE family. Heterotetramer of 2 MoaD subunits and 2 MoaE subunits. Also stable as homodimer. The enzyme changes between these two forms during catalysis.

The enzyme catalyses 2 [molybdopterin-synthase sulfur-carrier protein]-C-terminal-Gly-aminoethanethioate + cyclic pyranopterin phosphate + H2O = molybdopterin + 2 [molybdopterin-synthase sulfur-carrier protein]-C-terminal Gly-Gly + 2 H(+). Its pathway is cofactor biosynthesis; molybdopterin biosynthesis. In terms of biological role, converts molybdopterin precursor Z into molybdopterin. This requires the incorporation of two sulfur atoms into precursor Z to generate a dithiolene group. The sulfur is provided by MoaD. The protein is Molybdopterin synthase catalytic subunit 2 (moaE2) of Mycobacterium tuberculosis (strain CDC 1551 / Oshkosh).